The following is a 305-amino-acid chain: Glycine--tRNA ligase alpha subunit (305 aa).

The protein belongs to the class-II aminoacyl-tRNA synthetase family. In terms of assembly, tetramer of two alpha and two beta subunits.

It is found in the cytoplasm. It carries out the reaction tRNA(Gly) + glycine + ATP = glycyl-tRNA(Gly) + AMP + diphosphate. The polypeptide is Glycine--tRNA ligase alpha subunit (Streptococcus thermophilus (strain CNRZ 1066)).